Consider the following 1184-residue polypeptide: DNA-directed RNA polymerase subunit beta (1184 aa).

Belongs to the RNA polymerase beta chain family. As to quaternary structure, the RNAP catalytic core consists of 2 alpha, 1 beta, 1 beta' and 1 omega subunit. When a sigma factor is associated with the core the holoenzyme is formed, which can initiate transcription.

It carries out the reaction RNA(n) + a ribonucleoside 5'-triphosphate = RNA(n+1) + diphosphate. DNA-dependent RNA polymerase catalyzes the transcription of DNA into RNA using the four ribonucleoside triphosphates as substrates. The protein is DNA-directed RNA polymerase subunit beta of Fusobacterium nucleatum subsp. nucleatum (strain ATCC 25586 / DSM 15643 / BCRC 10681 / CIP 101130 / JCM 8532 / KCTC 2640 / LMG 13131 / VPI 4355).